We begin with the raw amino-acid sequence, 117 residues long: Type II secretion system protein I (117 aa).

Positions 1–6 (MKSKRG) are cleaved as a propeptide — leader sequence. N-methylphenylalanine is present on Phe-7. A helical transmembrane segment spans residues 7–27 (FTLLEVLVALAIFATAAISVI).

The protein belongs to the GSP I family. In terms of assembly, type II secretion is composed of four main components: the outer membrane complex, the inner membrane complex, the cytoplasmic secretion ATPase and the periplasm-spanning pseudopilus. Interacts with core component EpsG. Post-translationally, cleaved by prepilin peptidase. Methylated by prepilin peptidase at the amino group of the N-terminal phenylalanine once the leader sequence is cleaved by prepilin peptidase.

Its subcellular location is the cell inner membrane. Functionally, component of the type II secretion system required for the energy-dependent secretion of extracellular factors such as proteases and toxins from the periplasm. Part of the pseudopilus tip complex that is critical for the recognition and binding of secretion substrates. This Vibrio cholerae serotype O1 (strain ATCC 39315 / El Tor Inaba N16961) protein is Type II secretion system protein I (epsI).